Here is a 311-residue protein sequence, read N- to C-terminus: Syndecan-1 (311 aa).

Residues 1–22 (MRRAALWLWLCALALRLQPALL) form the signal peptide. The Extracellular segment spans residues 23–255 (HSVAVNMPPE…GLLDRKEVLG (233 aa)). Disordered stretches follow at residues 31–85 (PEDQ…PDAI) and 141–244 (TMAP…TGAS). The span at 32-42 (EDQDGSGDDSD) shows a compositional bias: acidic residues. Residue Ser-37 is glycosylated (O-linked (Xyl...) (chondroitin sulfate) serine). Asn-43 carries N-linked (GlcNAc...) asparagine glycosylation. O-linked (Xyl...) (heparan sulfate) serine glycosylation is found at Ser-45 and Ser-47. The span at 71–84 (TTTATAPEPTSPDA) shows a compositional bias: low complexity. 2 stretches are compositionally biased toward basic and acidic residues: residues 151–162 (PHRDVQPDHHET) and 169–180 (GRMEPHRPHVEE). O-linked (Xyl...) (chondroitin sulfate) serine glycosylation is found at Ser-204 and Ser-214. A compositionally biased stretch (low complexity) spans 215–226 (GENAAGAAGEPG). The helical transmembrane segment at 256–276 (GVIAGGLVGLIFAVCLVGFML) threads the bilayer. The Cytoplasmic segment spans residues 277-311 (YRMKKKDEGSYSLEEPKQANGGAYQKPTKQEEFYA). Residues 285–311 (GSYSLEEPKQANGGAYQKPTKQEEFYA) are disordered. Ser-286 is modified (phosphoserine).

Belongs to the syndecan proteoglycan family. In terms of assembly, interacts with CDCP1. Interacts (via C-terminus) with TIAM1 (via PDZ domain). Interacts with MDK. Shedding is enhanced by a number of factors such as heparanase, thrombin or EGF. Also by stress and wound healing. PMA-mediated shedding is inhibited by TIMP3.

It localises to the membrane. Its subcellular location is the secreted. The protein localises to the extracellular exosome. Functionally, cell surface proteoglycan that contains both heparan sulfate and chondroitin sulfate and that links the cytoskeleton to the interstitial matrix. Regulates exosome biogenesis in concert with SDCBP and PDCD6IP. Able to induce its own expression in dental mesenchymal cells and also in the neighboring dental epithelial cells via an MSX1-mediated pathway. This Bos taurus (Bovine) protein is Syndecan-1.